The primary structure comprises 293 residues: Ribosomal protein L11 methyltransferase (293 aa).

Positions 145, 166, 188, and 230 each coordinate S-adenosyl-L-methionine.

The protein belongs to the methyltransferase superfamily. PrmA family.

Its subcellular location is the cytoplasm. The enzyme catalyses L-lysyl-[protein] + 3 S-adenosyl-L-methionine = N(6),N(6),N(6)-trimethyl-L-lysyl-[protein] + 3 S-adenosyl-L-homocysteine + 3 H(+). Functionally, methylates ribosomal protein L11. The polypeptide is Ribosomal protein L11 methyltransferase (Escherichia coli O7:K1 (strain IAI39 / ExPEC)).